We begin with the raw amino-acid sequence, 233 residues long: UPF0725 protein At4g17990 (233 aa).

Belongs to the UPF0725 (EMB2204) family.

This chain is UPF0725 protein At4g17990, found in Arabidopsis thaliana (Mouse-ear cress).